The sequence spans 406 residues: CinA-like protein (406 aa).

Belongs to the CinA family.

The chain is CinA-like protein from Deinococcus geothermalis (strain DSM 11300 / CIP 105573 / AG-3a).